A 126-amino-acid polypeptide reads, in one-letter code: RutC family protein PH0854 (126 aa).

The protein belongs to the RutC family.

This chain is RutC family protein PH0854, found in Pyrococcus horikoshii (strain ATCC 700860 / DSM 12428 / JCM 9974 / NBRC 100139 / OT-3).